Consider the following 274-residue polypeptide: tRNA-cytidine(32) 2-sulfurtransferase (274 aa).

Residues 40–45 carry the PP-loop motif motif; sequence SGGKDS. Residues cysteine 115, cysteine 118, and cysteine 206 each contribute to the [4Fe-4S] cluster site.

It belongs to the TtcA family. As to quaternary structure, homodimer. Requires Mg(2+) as cofactor. The cofactor is [4Fe-4S] cluster.

Its subcellular location is the cytoplasm. The catalysed reaction is cytidine(32) in tRNA + S-sulfanyl-L-cysteinyl-[cysteine desulfurase] + AH2 + ATP = 2-thiocytidine(32) in tRNA + L-cysteinyl-[cysteine desulfurase] + A + AMP + diphosphate + H(+). The protein operates within tRNA modification. Catalyzes the ATP-dependent 2-thiolation of cytidine in position 32 of tRNA, to form 2-thiocytidine (s(2)C32). The sulfur atoms are provided by the cysteine/cysteine desulfurase (IscS) system. The chain is tRNA-cytidine(32) 2-sulfurtransferase from Pseudomonas fluorescens (strain ATCC BAA-477 / NRRL B-23932 / Pf-5).